The following is a 232-amino-acid chain: Aquaporin Z 2 (232 aa).

2 consecutive transmembrane segments (helical) span residues 9–29 and 32–52; these read FLGT…ASAF and VGIG…TMAY. Positions 63-65 match the NPA 1 motif; the sequence is NPA. 3 helical membrane passes run 82 to 102, 129 to 149, and 158 to 178; these read VSYV…LYVI, LTAA…IILG, and GFAP…SIPV. The NPA 2 signature appears at 184–186; that stretch reads NPA. Residues 200–220 traverse the membrane as a helical segment; it reads LSQLWLFWIAPLFGAAIAGIV.

It belongs to the MIP/aquaporin (TC 1.A.8) family. As to quaternary structure, homotetramer.

Its subcellular location is the cell inner membrane. It carries out the reaction H2O(in) = H2O(out). Channel that permits osmotically driven movement of water in both directions. It is involved in the osmoregulation and in the maintenance of cell turgor during volume expansion in rapidly growing cells. It mediates rapid entry or exit of water in response to abrupt changes in osmolarity. This chain is Aquaporin Z 2, found in Rhizobium meliloti (strain 1021) (Ensifer meliloti).